The primary structure comprises 424 residues: Tubulin-specific chaperone cofactor E-like protein (424 aa).

Ser18 and Ser41 each carry phosphoserine. 7 LRR repeats span residues 73–98 (CAHV…IVSN), 99–123 (VPQL…TCAG), 124–147 (SFSG…HTIL), 150–172 (LPDL…PSVC), 173–197 (CHSL…KLGV), 199–224 (FPSL…SLAR), and 226–250 (FPNL…KLNS). The region spanning 262 to 303 (IPLLQPYTTEERRKLVVARLPSVSKLNGSVVTDGEREDSERF) is the LRRCT domain. One can recognise a Ubiquitin-like domain in the interval 334–424 (AEVDLRPQSS…DKIFVESKTK (91 aa)). Residues 350–375 (FNDQVEEVSIRLDQTVAELKRQLKTL) are a coiled coil.

It localises to the cytoplasm. The protein resides in the cytoskeleton. Functionally, acts as a regulator of tubulin stability. This Rattus norvegicus (Rat) protein is Tubulin-specific chaperone cofactor E-like protein (Tbcel).